We begin with the raw amino-acid sequence, 567 residues long: Dihydroxy-acid dehydratase (567 aa).

[2Fe-2S] cluster is bound at residue C52. D84 lines the Mg(2+) pocket. C125 is a [2Fe-2S] cluster binding site. Mg(2+) contacts are provided by D126 and K127. The residue at position 127 (K127) is an N6-carboxylysine. C197 is a [2Fe-2S] cluster binding site. E448 is a binding site for Mg(2+). The active-site Proton acceptor is the S474.

This sequence belongs to the IlvD/Edd family. In terms of assembly, homodimer. Requires [2Fe-2S] cluster as cofactor. It depends on Mg(2+) as a cofactor.

It carries out the reaction (2R)-2,3-dihydroxy-3-methylbutanoate = 3-methyl-2-oxobutanoate + H2O. It catalyses the reaction (2R,3R)-2,3-dihydroxy-3-methylpentanoate = (S)-3-methyl-2-oxopentanoate + H2O. The protein operates within amino-acid biosynthesis; L-isoleucine biosynthesis; L-isoleucine from 2-oxobutanoate: step 3/4. It participates in amino-acid biosynthesis; L-valine biosynthesis; L-valine from pyruvate: step 3/4. Its function is as follows. Functions in the biosynthesis of branched-chain amino acids. Catalyzes the dehydration of (2R,3R)-2,3-dihydroxy-3-methylpentanoate (2,3-dihydroxy-3-methylvalerate) into 2-oxo-3-methylpentanoate (2-oxo-3-methylvalerate) and of (2R)-2,3-dihydroxy-3-methylbutanoate (2,3-dihydroxyisovalerate) into 2-oxo-3-methylbutanoate (2-oxoisovalerate), the penultimate precursor to L-isoleucine and L-valine, respectively. The chain is Dihydroxy-acid dehydratase from Streptococcus pneumoniae (strain CGSP14).